A 502-amino-acid chain; its full sequence is Cytochrome P450 71B19 (502 aa).

A helical transmembrane segment spans residues 1–21 (MAISFLCVFLITFVSLIFFAK). Residue Cys444 coordinates heme.

Belongs to the cytochrome P450 family. The cofactor is heme.

It is found in the membrane. In Arabidopsis thaliana (Mouse-ear cress), this protein is Cytochrome P450 71B19 (CYP71B19).